We begin with the raw amino-acid sequence, 437 residues long: Chromosomal replication initiator protein DnaA (437 aa).

Residues 1–67 are domain I, interacts with DnaA modulators; the sequence is MKNKIIASLK…KVVKDILGKD (67 aa). Positions 67 to 97 are domain II; the sequence is DATYEITFKEIPYETKVESGPLIKKRPLLIT. The segment at 98–313 is domain III, AAA+ region; that stretch reads PLNPKYTFEN…GAILRLIAYR (216 aa). Residues Gly-141, Gly-143, Lys-144, and Thr-145 each contribute to the ATP site. Residues 314-437 are domain IV, binds dsDNA; sequence NLYGTLNLSI…SKGFAQGESM (124 aa).

Belongs to the DnaA family. As to quaternary structure, oligomerizes as a right-handed, spiral filament on DNA at oriC.

It is found in the cytoplasm. Its function is as follows. Plays an essential role in the initiation and regulation of chromosomal replication. ATP-DnaA binds to the origin of replication (oriC) to initiate formation of the DNA replication initiation complex once per cell cycle. Binds the DnaA box (a 9 base pair repeat at the origin) and separates the double-stranded (ds)DNA. Forms a right-handed helical filament on oriC DNA; dsDNA binds to the exterior of the filament while single-stranded (ss)DNA is stabiized in the filament's interior. The ATP-DnaA-oriC complex binds and stabilizes one strand of the AT-rich DNA unwinding element (DUE), permitting loading of DNA polymerase. After initiation quickly degrades to an ADP-DnaA complex that is not apt for DNA replication. Binds acidic phospholipids. This is Chromosomal replication initiator protein DnaA from Thermosipho melanesiensis (strain DSM 12029 / CIP 104789 / BI429).